The primary structure comprises 357 residues: Meiotically up-regulated gene 135 protein (357 aa).

The protein belongs to the UPF0612 family.

The protein localises to the nucleus. Functionally, has a role in meiosis. The sequence is that of Meiotically up-regulated gene 135 protein (mug135) from Schizosaccharomyces pombe (strain 972 / ATCC 24843) (Fission yeast).